The chain runs to 205 residues: Regulator of G-protein signaling 4 (205 aa).

S-palmitoyl cysteine attachment occurs at residues cysteine 2, cysteine 12, and cysteine 95. The RGS domain maps to 62-178; it reads SLENLISHEC…LKSRFYLDLV (117 aa).

Palmitoylated on Cys-2 and/or Cys-12. In terms of processing, phosphorylated by cyclic GMP-dependent protein kinase.

Its function is as follows. Inhibits signal transduction by increasing the GTPase activity of G protein alpha subunits thereby driving them into their inactive GDP-bound form. Activity on G(z)-alpha is inhibited by phosphorylation of the G-protein. Activity on G(z)-alpha and G(i)-alpha-1 is inhibited by palmitoylation of the G-protein. The polypeptide is Regulator of G-protein signaling 4 (RGS4) (Pongo abelii (Sumatran orangutan)).